Here is a 219-residue protein sequence, read N- to C-terminus: Melanoma-associated antigen H1 (219 aa).

Over residues 1–13 (MPRGRKSRRRRNA) the composition is skewed to basic residues. The tract at residues 1-84 (MPRGRKSRRR…QKPSVPRSNF (84 aa)) is disordered. The region spanning 1–198 (MPRGRKSRRR…KDWPCNYDWD (198 aa)) is the MAGE domain. Acidic residues predominate over residues 44 to 57 (PEDDLSGPEEDPST). The segment covering 58-74 (PEEASTTPEEASSTAQA) has biased composition (low complexity). Tyrosine 195 is subject to Phosphotyrosine.

This is Melanoma-associated antigen H1 (MAGEH1) from Homo sapiens (Human).